The chain runs to 67 residues: Large ribosomal subunit protein uL29 (67 aa).

This sequence belongs to the universal ribosomal protein uL29 family.

This Pelotomaculum thermopropionicum (strain DSM 13744 / JCM 10971 / SI) protein is Large ribosomal subunit protein uL29.